The chain runs to 366 residues: Peroxisomal (S)-2-hydroxy-acid oxidase GLO4 (366 aa).

Positions 1 to 360 (MEDNLPVNVR…TRSHVMTEGD (360 aa)) constitute an FMN hydroxy acid dehydrogenase domain. Tyr27 provides a ligand contact to a 2-oxocarboxylate. FMN is bound by residues 80-82 (PTG), Ser109, 130-132 (QLY), and Thr158. Tyr132 contributes to the a 2-oxocarboxylate binding site. Arg167 contributes to the a 2-oxocarboxylate binding site. The FMN site is built by Lys231 and Ser253. Catalysis depends on His255, which acts as the Proton acceptor. A 2-oxocarboxylate is bound at residue Arg258. Residues 286–290 (DGGIR) and 309–310 (GR) contribute to the FMN site. A Microbody targeting signal motif is present at residues 364–366 (SLL).

The protein belongs to the FMN-dependent alpha-hydroxy acid dehydrogenase family. As to quaternary structure, homotetramer. Binds to CATB and CATC; these interactions are disturbed by alpha-hydroxy-2-pyridinemethanesulfonic acid (HPMS) and salicylic acid (SA). FMN serves as cofactor.

Its subcellular location is the peroxisome. It carries out the reaction a (2S)-2-hydroxycarboxylate + O2 = a 2-oxocarboxylate + H2O2. It participates in lipid metabolism; fatty acid metabolism. Its function is as follows. Oxidase that catalyzes the oxidation of a broad range of 2-hydroxyacids to the corresponding 2-oxoacids, with a reduction of O2 to H2O2. May be involved in a general medium- and long-chain fatty acid catabolic pathway such as alpha-oxidation. The sequence is that of Peroxisomal (S)-2-hydroxy-acid oxidase GLO4 (GLO4) from Oryza sativa subsp. japonica (Rice).